Consider the following 112-residue polypeptide: T cell receptor alpha variable 9-2 (112 aa).

A signal peptide spans 1–20 (MNYSPGLVSLILLLLGRTRG). Residues 21-112 (DSVTQMEGPV…DSAVYFCALS (92 aa)) form the Ig-like domain. N-linked (GlcNAc...) asparagine glycosylation occurs at Asn-41. Cys-42 and Cys-109 are oxidised to a cystine.

In terms of assembly, alpha-beta TR is a heterodimer composed of an alpha and beta chain; disulfide-linked. The alpha-beta TR is associated with the transmembrane signaling CD3 coreceptor proteins to form the TR-CD3 (TcR or TCR). The assembly of alpha-beta TR heterodimers with CD3 occurs in the endoplasmic reticulum where a single alpha-beta TR heterodimer associates with one CD3D-CD3E heterodimer, one CD3G-CD3E heterodimer and one CD247 homodimer forming a stable octameric structure. CD3D-CD3E and CD3G-CD3E heterodimers preferentially associate with TR alpha and TR beta chains, respectively. The association of the CD247 homodimer is the last step of TcR assembly in the endoplasmic reticulum and is required for transport to the cell surface.

The protein localises to the cell membrane. V region of the variable domain of T cell receptor (TR) alpha chain that participates in the antigen recognition. Alpha-beta T cell receptors are antigen specific receptors which are essential to the immune response and are present on the cell surface of T lymphocytes. Recognize peptide-major histocompatibility (MH) (pMH) complexes that are displayed by antigen presenting cells (APC), a prerequisite for efficient T cell adaptive immunity against pathogens. Binding of alpha-beta TR to pMH complex initiates TR-CD3 clustering on the cell surface and intracellular activation of LCK that phosphorylates the ITAM motifs of CD3G, CD3D, CD3E and CD247 enabling the recruitment of ZAP70. In turn ZAP70 phosphorylates LAT, which recruits numerous signaling molecules to form the LAT signalosome. The LAT signalosome propagates signal branching to three major signaling pathways, the calcium, the mitogen-activated protein kinase (MAPK) kinase and the nuclear factor NF-kappa-B (NF-kB) pathways, leading to the mobilization of transcription factors that are critical for gene expression and essential for T cell growth and differentiation. The T cell repertoire is generated in the thymus, by V-(D)-J rearrangement. This repertoire is then shaped by intrathymic selection events to generate a peripheral T cell pool of self-MH restricted, non-autoaggressive T cells. Post-thymic interaction of alpha-beta TR with the pMH complexes shapes TR structural and functional avidity. This Homo sapiens (Human) protein is T cell receptor alpha variable 9-2.